Reading from the N-terminus, the 567-residue chain is Formate--tetrahydrofolate ligase (567 aa).

68–75 (TPLGEGKT) provides a ligand contact to ATP.

It belongs to the formate--tetrahydrofolate ligase family.

It carries out the reaction (6S)-5,6,7,8-tetrahydrofolate + formate + ATP = (6R)-10-formyltetrahydrofolate + ADP + phosphate. Its pathway is one-carbon metabolism; tetrahydrofolate interconversion. This Desulforamulus reducens (strain ATCC BAA-1160 / DSM 100696 / MI-1) (Desulfotomaculum reducens) protein is Formate--tetrahydrofolate ligase.